A 502-amino-acid chain; its full sequence is ATP synthase subunit alpha, sodium ion specific (502 aa).

169–176 (GDRQTGKT) is an ATP binding site.

Belongs to the ATPase alpha/beta chains family. In terms of assembly, F-type ATPases have 2 components, CF(1) - the catalytic core - and CF(0) - the membrane proton channel. CF(1) has five subunits: alpha(3), beta(3), gamma(1), delta(1), epsilon(1). CF(0) has three main subunits: a, b and c.

It localises to the cell membrane. The catalysed reaction is 4 Na(+)(in) + ATP + H2O = 4 Na(+)(out) + ADP + phosphate + H(+). Its activity is regulated as follows. Inhibited by nitrate. Its function is as follows. Produces ATP from ADP in the presence of a sodium ion gradient across the membrane. The alpha chain is a regulatory subunit. In Acetobacterium woodii (strain ATCC 29683 / DSM 1030 / JCM 2381 / KCTC 1655 / WB1), this protein is ATP synthase subunit alpha, sodium ion specific.